Reading from the N-terminus, the 312-residue chain is Acetaldehyde dehydrogenase 4 (312 aa).

Ser12–Ile15 lines the NAD(+) pocket. Catalysis depends on Cys132, which acts as the Acyl-thioester intermediate. NAD(+) contacts are provided by residues Ser163–Asn171 and Asn290.

It belongs to the acetaldehyde dehydrogenase family.

It catalyses the reaction acetaldehyde + NAD(+) + CoA = acetyl-CoA + NADH + H(+). The chain is Acetaldehyde dehydrogenase 4 from Azotobacter vinelandii (strain DJ / ATCC BAA-1303).